Consider the following 586-residue polypeptide: Membrane protein insertase YidC (586 aa).

5 consecutive transmembrane segments (helical) span residues 5-25 (TLIG…LMAP), 371-391 (GVII…LTMA), 436-456 (LGGC…FYVF), 486-506 (IPLY…AVFF), and 522-542 (FMMY…PSGL).

This sequence belongs to the OXA1/ALB3/YidC family. Type 1 subfamily. Interacts with the Sec translocase complex via SecD. Specifically interacts with transmembrane segments of nascent integral membrane proteins during membrane integration.

It is found in the cell inner membrane. In terms of biological role, required for the insertion and/or proper folding and/or complex formation of integral membrane proteins into the membrane. Involved in integration of membrane proteins that insert both dependently and independently of the Sec translocase complex, as well as at least some lipoproteins. Aids folding of multispanning membrane proteins. The protein is Membrane protein insertase YidC of Chloroherpeton thalassium (strain ATCC 35110 / GB-78).